Here is a 178-residue protein sequence, read N- to C-terminus: Interleukin-10 (178 aa).

Positions 1 to 18 (MPSSALLYCLILLAGVRP) are cleaved as a signal peptide. Intrachain disulfides connect Cys-30/Cys-126 and Cys-80/Cys-132. The N-linked (GlcNAc...) asparagine glycan is linked to Asn-134.

It belongs to the IL-10 family. In terms of assembly, homodimer. Interacts with IL10RA and IL10RB.

The protein localises to the secreted. Major immune regulatory cytokine that acts on many cells of the immune system where it has profound anti-inflammatory functions, limiting excessive tissue disruption caused by inflammation. Mechanistically, IL10 binds to its heterotetrameric receptor comprising IL10RA and IL10RB leading to JAK1 and STAT2-mediated phosphorylation of STAT3. In turn, STAT3 translocates to the nucleus where it drives expression of anti-inflammatory mediators. Targets antigen-presenting cells (APCs) such as macrophages and monocytes and inhibits their release of pro-inflammatory cytokines including granulocyte-macrophage colony-stimulating factor /GM-CSF, granulocyte colony-stimulating factor/G-CSF, IL-1 alpha, IL-1 beta, IL-6, IL-8 and TNF-alpha. Also interferes with antigen presentation by reducing the expression of MHC-class II and co-stimulatory molecules, thereby inhibiting their ability to induce T cell activation. In addition, controls the inflammatory response of macrophages by reprogramming essential metabolic pathways including mTOR signaling. This chain is Interleukin-10 (IL10), found in Meriones unguiculatus (Mongolian jird).